Reading from the N-terminus, the 263-residue chain is 3-deoxy-manno-octulosonate cytidylyltransferase 2 (263 aa).

It belongs to the KdsB family.

Its subcellular location is the cytoplasm. It catalyses the reaction 3-deoxy-alpha-D-manno-oct-2-ulosonate + CTP = CMP-3-deoxy-beta-D-manno-octulosonate + diphosphate. It participates in nucleotide-sugar biosynthesis; CMP-3-deoxy-D-manno-octulosonate biosynthesis; CMP-3-deoxy-D-manno-octulosonate from 3-deoxy-D-manno-octulosonate and CTP: step 1/1. It functions in the pathway bacterial outer membrane biogenesis; lipopolysaccharide biosynthesis. Activates KDO (a required 8-carbon sugar) for incorporation into bacterial lipopolysaccharide in Gram-negative bacteria. This Paraburkholderia phytofirmans (strain DSM 17436 / LMG 22146 / PsJN) (Burkholderia phytofirmans) protein is 3-deoxy-manno-octulosonate cytidylyltransferase 2.